A 176-amino-acid chain; its full sequence is Large ribosomal subunit protein uL16 (176 aa).

Belongs to the universal ribosomal protein uL16 family.

The sequence is that of Large ribosomal subunit protein uL16 from Halobacterium salinarum (strain ATCC 29341 / DSM 671 / R1).